The sequence spans 210 residues: 7-carboxy-7-deazaguanine synthase (210 aa).

Residues 25–27 (IQG) and Arg40 contribute to the substrate site. Residues 31-210 (HTGTAAYFIR…LQTHKYLNIP (180 aa)) enclose the Radical SAM core domain. Residues Cys44, Cys48, and Cys51 each coordinate [4Fe-4S] cluster. Residue Thr84 coordinates substrate. Residues Gly86 and 127 to 129 (SPK) contribute to the S-adenosyl-L-methionine site. Pro210 lines the substrate pocket.

It belongs to the radical SAM superfamily. 7-carboxy-7-deazaguanine synthase family. In terms of assembly, homodimer. It depends on [4Fe-4S] cluster as a cofactor. Requires S-adenosyl-L-methionine as cofactor. The cofactor is Mg(2+).

It carries out the reaction 6-carboxy-5,6,7,8-tetrahydropterin + H(+) = 7-carboxy-7-deazaguanine + NH4(+). It participates in purine metabolism; 7-cyano-7-deazaguanine biosynthesis. Its function is as follows. Catalyzes the complex heterocyclic radical-mediated conversion of 6-carboxy-5,6,7,8-tetrahydropterin (CPH4) to 7-carboxy-7-deazaguanine (CDG), a step common to the biosynthetic pathways of all 7-deazapurine-containing compounds. The sequence is that of 7-carboxy-7-deazaguanine synthase from Flavobacterium psychrophilum (strain ATCC 49511 / DSM 21280 / CIP 103535 / JIP02/86).